An 820-amino-acid polypeptide reads, in one-letter code: Serine/threonine-protein phosphatase 4 regulatory subunit 3 (820 aa).

Residues 1–100 form the WH1 domain; sequence MSDTRRRVKV…DEIWEKICQV (100 aa). 2 disordered regions span residues 687 to 711 and 750 to 820; these read EDEEEEGEAVVPPVEKTKTEDDFPE and AANG…RLGS. The span at 701 to 711 shows a compositional bias: basic and acidic residues; sequence EKTKTEDDFPE. The segment covering 750 to 761 has biased composition (polar residues); sequence AANGANSTNSKS. Residues 770 to 784 are compositionally biased toward low complexity; the sequence is SSNGSSSKNTSLTTT. Acidic residues predominate over residues 798-809; that stretch reads YPDDEDEEEEED.

Belongs to the SMEK family. Serine/threonine-protein phosphatase 4 (PP4) occurs in different assemblies of the catalytic and one or more regulatory subunits.

In terms of biological role, regulatory subunit of serine/threonine-protein phosphatase 4 (PP4). In Xenopus tropicalis (Western clawed frog), this protein is Serine/threonine-protein phosphatase 4 regulatory subunit 3.